The sequence spans 222 residues: Protein CicA (222 aa).

This Caulobacter vibrioides (strain ATCC 19089 / CIP 103742 / CB 15) (Caulobacter crescentus) protein is Protein CicA (cicA).